A 337-amino-acid polypeptide reads, in one-letter code: CMP-sialic acid transporter (337 aa).

Over M1–T9 the chain is Cytoplasmic. The chain crosses the membrane as a helical span at residues L10–A30. Residues L31 to T45 are Lumenal-facing. Residues T46 to A64 form a helical membrane-spanning segment. K55 is a CMP-N-acetyl-beta-neuraminate binding site. Over K65–E87 the chain is Cytoplasmic. A helical transmembrane segment spans residues L88–A108. Q101–N102 lines the CMP-N-acetyl-beta-neuraminate pocket. Over L109–A114 the chain is Lumenal. A helical membrane pass occupies residues A115–M135. A CMP-N-acetyl-beta-neuraminate-binding site is contributed by Y117–K124. Over L136–S141 the chain is Cytoplasmic. Residues K142–W160 form a helical membrane-spanning segment. Topologically, residues K161–L175 are lumenal. The chain crosses the membrane as a helical span at residues L176 to E196. S188 is a CMP-N-acetyl-beta-neuraminate binding site. The Cytoplasmic portion of the chain corresponds to K197–R209. Residue N210–Y214 participates in CMP-N-acetyl-beta-neuraminate binding. The helical transmembrane segment at N210 to S228 threads the bilayer. Topologically, residues D229–T243 are lumenal. The helical transmembrane segment at Y244–V262 threads the bilayer. The Cytoplasmic segment spans residues V263 to N269. Residues I270 to V288 traverse the membrane as a helical segment. Position 272 (K272) interacts with CMP-N-acetyl-beta-neuraminate. Residues M289–T296 lie on the Lumenal side of the membrane. Residues L297–L315 form a helical membrane-spanning segment. The Cytoplasmic segment spans residues P316–V337. A disordered region spans residues P316–V337.

This sequence belongs to the nucleotide-sugar transporter family. SLC35A subfamily. In terms of assembly, monomer.

The protein localises to the golgi apparatus membrane. It localises to the golgi apparatus. The catalysed reaction is CMP-N-acetyl-beta-neuraminate(in) + CMP(out) = CMP-N-acetyl-beta-neuraminate(out) + CMP(in). The enzyme catalyses CMP-N-acetyl-beta-neuraminate(in) + AMP(out) = CMP-N-acetyl-beta-neuraminate(out) + AMP(in). It catalyses the reaction CDP-L-ribitol(in) + CDP(out) = CDP-L-ribitol(out) + CDP(in). It carries out the reaction UMP(out) + CMP-N-acetyl-beta-neuraminate(in) = UMP(in) + CMP-N-acetyl-beta-neuraminate(out). Its function is as follows. Transports CMP-sialic acid from the cytosol into the Golgi apparatus, functioning as an antiporter that exchanges CMP-sialic acid for CMP. Binds both CMP-sialic acid and free CMP, but has higher affinity for free CMP. Also able to exchange CMP-sialic acid for AMP and UMP. Also mediates the transport of CDP-ribitol. This is CMP-sialic acid transporter from Homo sapiens (Human).